The chain runs to 174 residues: UPF0340 protein SH0921 (174 aa).

It belongs to the UPF0340 family.

This chain is UPF0340 protein SH0921, found in Staphylococcus haemolyticus (strain JCSC1435).